A 522-amino-acid chain; its full sequence is MVSTPSPKTKVYLLEQRKNQELNIEHIDEEMRLEQVRQAASKMEWTSFGQAVRRNLLEKRNTIDADGRIDVLNGIAYMKTKMPIEENNLMEEKIRVMAESLGCLHKQTSRGWSINRQEDLIMDFTVNDGEVTTVVLSFWEEPSFYSPEATRMLQLGMWTELRNRISDMLLTYDKLLSRDDRRNCMGAMRMLEMLFGHFSQDPSYTSIHRSNYGFYLPRNDLRAGRVYYLAEPHFRNIRSKDHIFQLQKDDHEVLPYFEFSFAKHDSPCTLPEFDTKGWAESIEANAVICMKLSRGFNLTETTRKKLGAISAKTPSVKHFTNSYRYVTGAVKIENNLQMITQFGDGQTQHFYNVDVNQLRNDGDSVITEIYLKHLQDFHEIIAILRNEAMHISLWESMISACYEKQGMKKHTVAAIKMDVFLTREQIVITFDTKFAPVKVVIQDSGVCEAKVNVVHAQTGLQIAEKIDETLSRKLNETWSIPNMLTYAVSGSDCNLAKIKVPLRSENPETVGPIPTYAAGRSF.

A coiled-coil region spans residues 13–40 (LLEQRKNQELNIEHIDEEMRLEQVRQAA).

This sequence belongs to the Mediator complex subunit 1 family. In terms of assembly, component of the Mediator complex.

The protein resides in the nucleus. Functionally, component of the Mediator complex, a coactivator involved in the regulated transcription of nearly all RNA polymerase II-dependent genes. Mediator functions as a bridge to convey information from gene-specific regulatory proteins to the basal RNA polymerase II transcription machinery. Mediator is recruited to promoters by direct interactions with regulatory proteins and serves as a scaffold for the assembly of a functional preinitiation complex with RNA polymerase II and the general transcription factors. This is Mediator of RNA polymerase II transcription subunit 1.2 (mdt-1.2) from Caenorhabditis elegans.